Consider the following 458-residue polypeptide: UDP-N-acetylmuramoylalanine--D-glutamate ligase (458 aa).

ATP is bound at residue 124 to 130 (GSDGKTT).

Belongs to the MurCDEF family.

The protein localises to the cytoplasm. It carries out the reaction UDP-N-acetyl-alpha-D-muramoyl-L-alanine + D-glutamate + ATP = UDP-N-acetyl-alpha-D-muramoyl-L-alanyl-D-glutamate + ADP + phosphate + H(+). It participates in cell wall biogenesis; peptidoglycan biosynthesis. Cell wall formation. Catalyzes the addition of glutamate to the nucleotide precursor UDP-N-acetylmuramoyl-L-alanine (UMA). In Clostridium novyi (strain NT), this protein is UDP-N-acetylmuramoylalanine--D-glutamate ligase.